A 330-amino-acid chain; its full sequence is tRNA uridine(34) hydroxylase (330 aa).

Residues 123–217 enclose the Rhodanese domain; it reads SDPEVILVDT…YLEEVKQEES (95 aa). Cys177 functions as the Cysteine persulfide intermediate in the catalytic mechanism.

This sequence belongs to the TrhO family.

The enzyme catalyses uridine(34) in tRNA + AH2 + O2 = 5-hydroxyuridine(34) in tRNA + A + H2O. In terms of biological role, catalyzes oxygen-dependent 5-hydroxyuridine (ho5U) modification at position 34 in tRNAs. The protein is tRNA uridine(34) hydroxylase of Shewanella sp. (strain ANA-3).